A 456-amino-acid polypeptide reads, in one-letter code: tRNA-2-methylthio-N(6)-dimethylallyladenosine synthase (456 aa).

Residues 19–137 (KHFFIETWGC…FPEYLHRVQV (119 aa)) form the MTTase N-terminal domain. Positions 28, 64, 98, 174, 178, and 181 each coordinate [4Fe-4S] cluster. Residues 160-392 (RKSNVKAFVT…AVNEGIVVGN (233 aa)) enclose the Radical SAM core domain. The region spanning 393–456 (KAAEGKIYEV…SFSLVGEVVE (64 aa)) is the TRAM domain.

This sequence belongs to the methylthiotransferase family. MiaB subfamily. As to quaternary structure, monomer. It depends on [4Fe-4S] cluster as a cofactor.

The protein localises to the cytoplasm. The catalysed reaction is N(6)-dimethylallyladenosine(37) in tRNA + (sulfur carrier)-SH + AH2 + 2 S-adenosyl-L-methionine = 2-methylsulfanyl-N(6)-dimethylallyladenosine(37) in tRNA + (sulfur carrier)-H + 5'-deoxyadenosine + L-methionine + A + S-adenosyl-L-homocysteine + 2 H(+). In terms of biological role, catalyzes the methylthiolation of N6-(dimethylallyl)adenosine (i(6)A), leading to the formation of 2-methylthio-N6-(dimethylallyl)adenosine (ms(2)i(6)A) at position 37 in tRNAs that read codons beginning with uridine. This Clostridium botulinum (strain Eklund 17B / Type B) protein is tRNA-2-methylthio-N(6)-dimethylallyladenosine synthase.